Consider the following 442-residue polypeptide: MAKPIVAIVGRPNVGKSTLFNRLTGGRVAIVEDQPGVTRDRLYRDANWLDREFTVVDTGGLDFGDRENPFSAIIHKQAEAAMEEADVILFLVDGRSGITADDEAVAAILRKAKKPVFLVVNKIEDFSQRERYFDFYSLGLGEPIPISASHGMNTGDLLDAVVAVLPENNGEDDDPDTIKIAVIGRPNVGKSSLVNAILGQERVIVSDIPGTTRDAIDTAFDRDGKRYILIDTAGMRRKGRIEEAVERYSVMRSLRAIDRSDVVLMVIDASQGVTEQDKKIAGYAHEAGKACVLVLNKWDLVPKDDKTMSRFDKVVRSEMSFLAYAPTIYVSALTKQRLPKILELVDFVAEQATRRISTSVLNELLADIQRVTPAPTDRGRRLKILFVTQTAVKPPTFVFFVNDEDLFHFSYRRHVENRFRETFGFEGVPMRFFIREREKEKD.

EngA-type G domains are found at residues 4 to 169 (PIVA…PENN) and 178 to 353 (IKIA…EQAT). Residues 10 to 17 (GRPNVGKS), 57 to 61 (DTGGL), 121 to 124 (NKIE), 184 to 191 (GRPNVGKS), 231 to 235 (DTAGM), and 296 to 299 (NKWD) contribute to the GTP site. In terms of domain architecture, KH-like spans 354–438 (RRISTSVLNE…PMRFFIRERE (85 aa)).

This sequence belongs to the TRAFAC class TrmE-Era-EngA-EngB-Septin-like GTPase superfamily. EngA (Der) GTPase family. As to quaternary structure, associates with the 50S ribosomal subunit.

In terms of biological role, GTPase that plays an essential role in the late steps of ribosome biogenesis. The protein is GTPase Der of Heliobacterium modesticaldum (strain ATCC 51547 / Ice1).